The following is a 98-amino-acid chain: Protein S100-A11 (98 aa).

Phosphothreonine is present on threonine 5. 2 EF-hand domains span residues leucine 12–lysine 47 and lysine 50–alanine 85. Residue lysine 22 is modified to N6-acetyllysine. Positions 26, 28, 33, 63, 65, 67, 69, and 74 each coordinate Ca(2+).

It belongs to the S-100 family. Homodimer; disulfide-linked. In terms of processing, phosphorylation at Thr-5 significantly suppresses homodimerization and promotes association with NCL/nucleolin which induces nuclear translocation.

The protein localises to the cytoplasm. The protein resides in the nucleus. Its function is as follows. Facilitates the differentiation and the cornification of keratinocytes. The chain is Protein S100-A11 (S100a11) from Rattus norvegicus (Rat).